Consider the following 575-residue polypeptide: Transmembrane protein 108 (575 aa).

The chain crosses the membrane as a helical span at residues 9 to 29 (YCQLLSFLLILALTEALAFAI). The interval 31-169 (EPSPRESLQV…TTTRRPPRPP (139 aa)) is interaction with SH3GL2. The disordered stretch occupies residues 65–398 (MLTPNPDGPP…PSRVSESTIS (334 aa)). The segment covering 74–87 (PSQAAAPMATPTPR) has biased composition (low complexity). Residues 95-115 (HTISTIAATVTAPHSESSLST) show a composition bias toward polar residues. The span at 146–160 (PPGATSRPTTAPPRT) shows a compositional bias: low complexity. Positions 173-407 (RKGAGNSSRP…SGAKEETVAT (235 aa)) are interaction with DST (isoform 1). Positions 244–271 (YSSSPQPQTVAATTVPSNTSWAPTTTSL) are enriched in polar residues. Low complexity predominate over residues 290–318 (TFTSQGGTPDATAASGAPVSPQAAPVPSQ). Residues 329-352 (PSHSDSWLTVTPGTSRPLSTSSGV) are compositionally biased toward polar residues. Positions 353-366 (FTAATGPTPAAFDT) are enriched in low complexity. Residues 367–398 (SVSAPSQGIPQGASTTPQAPTHPSRVSESTIS) show a composition bias toward polar residues. Residues 469 to 489 (IAWVILAISVPISSCSVLLTV) traverse the membrane as a helical segment. The tract at residues 490–575 (CCMKRKKKTA…FVGNDQVSEI (86 aa)) is interaction with CYFIP2.

In terms of assembly, interacts with DST (isoform 1). Interacts with SH3GL2. Interacts (via N-terminus) with CYFIP1 and CYFIP2; the interactions associate TMEM108 with the WAVE1 complex. Glycosylated.

The protein resides in the membrane. It localises to the postsynaptic density. It is found in the endosome membrane. Its subcellular location is the cell projection. The protein localises to the axon. The protein resides in the dendrite. It localises to the early endosome. Functionally, transmembrane protein required for proper cognitive functions. Involved in the development of dentate gyrus (DG) neuron circuitry, is necessary for AMPA receptors surface expression and proper excitatory postsynaptic currents of DG granule neurons. Regulates the organization and stability of the microtubule network of sensory neurons to allow axonal transport. Through the interaction with DST, mediates the docking of the dynein/dynactin motor complex to vesicle cargos for retrograde axonal transport. In hippocampal neurons, required for BDNF-dependent dendrite outgrowth. Cooperates with SH3GL2 and recruits the WAVE1 complex to facilitate actin-dependent BDNF:NTRK2 early endocytic trafficking and mediate signaling from early endosomes. The chain is Transmembrane protein 108 from Homo sapiens (Human).